The chain runs to 76 residues: cAMP-dependent protein kinase inhibitor alpha (76 aa).

Residue T2 is modified to N-acetylthreonine. The tract at residues 49 to 76 (KTEGEEDAQRSSTEQSGEAQGEAAKSES) is disordered.

It belongs to the PKI family.

Functionally, extremely potent competitive inhibitor of cAMP-dependent protein kinase activity, this protein interacts with the catalytic subunit of the enzyme after the cAMP-induced dissociation of its regulatory chains. This Homo sapiens (Human) protein is cAMP-dependent protein kinase inhibitor alpha (PKIA).